Here is a 420-residue protein sequence, read N- to C-terminus: Gamma-glutamyl phosphate reductase (420 aa).

It belongs to the gamma-glutamyl phosphate reductase family.

The protein resides in the cytoplasm. The enzyme catalyses L-glutamate 5-semialdehyde + phosphate + NADP(+) = L-glutamyl 5-phosphate + NADPH + H(+). Its pathway is amino-acid biosynthesis; L-proline biosynthesis; L-glutamate 5-semialdehyde from L-glutamate: step 2/2. Functionally, catalyzes the NADPH-dependent reduction of L-glutamate 5-phosphate into L-glutamate 5-semialdehyde and phosphate. The product spontaneously undergoes cyclization to form 1-pyrroline-5-carboxylate. The polypeptide is Gamma-glutamyl phosphate reductase (Streptococcus pneumoniae (strain 70585)).